A 513-amino-acid chain; its full sequence is Putative BTB/POZ domain-containing protein L55 (513 aa).

In terms of domain architecture, BTB spans 11–83 (SPIKIILQDI…FHGYKMEISD (73 aa)).

It belongs to the mimivirus BTB/WD family.

In Acanthamoeba polyphaga (Amoeba), this protein is Putative BTB/POZ domain-containing protein L55.